A 458-amino-acid polypeptide reads, in one-letter code: Exodeoxyribonuclease 7 large subunit (458 aa).

It belongs to the XseA family. Heterooligomer composed of large and small subunits.

Its subcellular location is the cytoplasm. It catalyses the reaction Exonucleolytic cleavage in either 5'- to 3'- or 3'- to 5'-direction to yield nucleoside 5'-phosphates.. Functionally, bidirectionally degrades single-stranded DNA into large acid-insoluble oligonucleotides, which are then degraded further into small acid-soluble oligonucleotides. The protein is Exodeoxyribonuclease 7 large subunit of Shouchella clausii (strain KSM-K16) (Alkalihalobacillus clausii).